A 62-amino-acid polypeptide reads, in one-letter code: Keratin-associated protein 6-2 (62 aa).

It belongs to the KRTAP type 6 family. In terms of assembly, interacts with hair keratins.

In terms of biological role, in the hair cortex, hair keratin intermediate filaments are embedded in an interfilamentous matrix, consisting of hair keratin-associated proteins (KRTAP), which are essential for the formation of a rigid and resistant hair shaft through their extensive disulfide bond cross-linking with abundant cysteine residues of hair keratins. The matrix proteins include the high-sulfur and high-glycine-tyrosine keratins. The sequence is that of Keratin-associated protein 6-2 (KRTAP6-2) from Homo sapiens (Human).